A 2729-amino-acid polypeptide reads, in one-letter code: Protein NO VEIN (2729 aa).

Positions 1-27 are disordered; it reads MQGNHDGSWSLHPSTNNGSGRANGNIN. 2 short sequence motifs (nuclear localization signal) span residues 194–201 and 473–480; these read KRKVDVLR and MKRLGGSN. Disordered stretches follow at residues 477–517 and 2482–2515; these read GGSN…IPKL and LPSSSKTRHGSSKTNTDDSKQELDTSSSKEDVTE. Composition is skewed to basic and acidic residues over residues 488-497 and 2496-2515; these read RNHEKSDSSK and NTDDSKQELDTSSSKEDVTE.

Specifically expressed in developing embryos, leaf primordia, and shoot and root apical meristems.

Its subcellular location is the nucleus. Essential protein required for cell fate determination during embryogenesis. Mediates auxin-dependent coordinated cell-fate specification and patterning in embryos (e.g. cotyledon outgrowth and separation), shoots and roots (e.g. leaf vascular development, cellular patterning and stem cell maintenance in the meristems). Required for provascular PIN1 expression and region-specific expression of PIN7 in leaf primordia, cell type-specific expression of PIN3, PIN4, and PIN7 in the root, and PIN2 polarity in the root cortex. In Arabidopsis thaliana (Mouse-ear cress), this protein is Protein NO VEIN.